The following is a 189-amino-acid chain: Recombination protein RecR (189 aa).

The C4-type zinc-finger motif lies at 48–63; it reads CQTCFHLSAEPLCDIC. Residues 71-165 form the Toprim domain; it reads QLLCVVADSR…QVSRIAYGLP (95 aa).

It belongs to the RecR family.

Functionally, may play a role in DNA repair. It seems to be involved in an RecBC-independent recombinational process of DNA repair. It may act with RecF and RecO. The chain is Recombination protein RecR from Prochlorococcus marinus (strain MIT 9303).